Consider the following 515-residue polypeptide: 2-isopropylmalate synthase (515 aa).

Residues 5–267 enclose the Pyruvate carboxyltransferase domain; the sequence is VIIFDTTLRD…HTSLKNDEIH (263 aa). Residues D14, H202, H204, and N238 each coordinate Mn(2+). Positions 392–515 are regulatory domain; it reads KLNYLSVQSG…EIKQNKITTV (124 aa).

The protein belongs to the alpha-IPM synthase/homocitrate synthase family. LeuA type 1 subfamily. Homodimer. Mn(2+) serves as cofactor.

The protein localises to the cytoplasm. The catalysed reaction is 3-methyl-2-oxobutanoate + acetyl-CoA + H2O = (2S)-2-isopropylmalate + CoA + H(+). Its pathway is amino-acid biosynthesis; L-leucine biosynthesis; L-leucine from 3-methyl-2-oxobutanoate: step 1/4. In terms of biological role, catalyzes the condensation of the acetyl group of acetyl-CoA with 3-methyl-2-oxobutanoate (2-ketoisovalerate) to form 3-carboxy-3-hydroxy-4-methylpentanoate (2-isopropylmalate). The chain is 2-isopropylmalate synthase from Aliivibrio salmonicida (strain LFI1238) (Vibrio salmonicida (strain LFI1238)).